Here is a 442-residue protein sequence, read N- to C-terminus: Probable glycine dehydrogenase (decarboxylating) subunit 1 (442 aa).

This sequence belongs to the GcvP family. N-terminal subunit subfamily. As to quaternary structure, the glycine cleavage system is composed of four proteins: P, T, L and H. In this organism, the P 'protein' is a heterodimer of two subunits.

The catalysed reaction is N(6)-[(R)-lipoyl]-L-lysyl-[glycine-cleavage complex H protein] + glycine + H(+) = N(6)-[(R)-S(8)-aminomethyldihydrolipoyl]-L-lysyl-[glycine-cleavage complex H protein] + CO2. Its function is as follows. The glycine cleavage system catalyzes the degradation of glycine. The P protein binds the alpha-amino group of glycine through its pyridoxal phosphate cofactor; CO(2) is released and the remaining methylamine moiety is then transferred to the lipoamide cofactor of the H protein. The polypeptide is Probable glycine dehydrogenase (decarboxylating) subunit 1 (Geotalea uraniireducens (strain Rf4) (Geobacter uraniireducens)).